We begin with the raw amino-acid sequence, 143 residues long: MDVLKKGFSFAKEGVVAAAEKTKQGVQDAAEKTKQGVQDAAEKTKEGVMYVGTKTKEGVVQSVNTVTEKTKEQANVVGGAVVAGVNTVASKTVEGVENVAAASGVVKLDEHGREIPAEQVAEGKQTTQEPLVEATEATEETGK.

3 repeat units span residues Glu-20–Ala-30, Glu-31–Ala-41, and Glu-42–Gly-52. The 5 X 11 AA tandem repeats of [EGST]-K-T-K-[EQ]-[GQ]-[VA]-X(4) stretch occupies residues Glu-20–Gly-78. The 4; approximate repeat unit spans residues Thr-53–Thr-67. Copy 5 of the repeat occupies Glu-68–Gly-78. The tract at residues Arg-113 to Lys-143 is disordered.

This sequence belongs to the synuclein family. In terms of tissue distribution, nervous system tissue. Found in the electric lobe, the brain and the spinal cord.

The protein localises to the nucleus. Its function is as follows. May have a role in synaptic regulation or signal transduction. The polypeptide is Synuclein (Tetronarce californica (Pacific electric ray)).